The sequence spans 164 residues: General odorant-binding protein 1 (164 aa).

Residues 1–19 form the signal peptide; it reads MPGVLRALLLLAAAAPLLA. Cystine bridges form between Cys-38–Cys-73, Cys-69–Cys-127, and Cys-116–Cys-136.

The protein belongs to the PBP/GOBP family. As to expression, antenna.

In terms of biological role, present in the aqueous fluid surrounding olfactory sensory dendrites and are thought to aid in the capture and transport of hydrophobic odorants into and through this fluid. This Heliothis virescens (Tobacco budworm moth) protein is General odorant-binding protein 1.